Consider the following 118-residue polypeptide: Cell division topological specificity factor (118 aa).

The tract at residues 86–118 (RSQAKAVSSQENGASSQEAVSSQESVSTPGAME) is disordered. Over residues 99–112 (ASSQEAVSSQESVS) the composition is skewed to low complexity.

Belongs to the MinE family.

Prevents the cell division inhibition by proteins MinC and MinD at internal division sites while permitting inhibition at polar sites. This ensures cell division at the proper site by restricting the formation of a division septum at the midpoint of the long axis of the cell. This Prochlorococcus marinus (strain MIT 9313) protein is Cell division topological specificity factor.